We begin with the raw amino-acid sequence, 453 residues long: Trigger factor (453 aa).

The PPIase FKBP-type domain maps to 171–256; the sequence is GDRVTISFKG…ATVLEAPQES (86 aa).

This sequence belongs to the FKBP-type PPIase family. Tig subfamily.

It is found in the cytoplasm. It catalyses the reaction [protein]-peptidylproline (omega=180) = [protein]-peptidylproline (omega=0). Involved in protein export. Acts as a chaperone by maintaining the newly synthesized protein in an open conformation. Functions as a peptidyl-prolyl cis-trans isomerase. The polypeptide is Trigger factor (Rhodopseudomonas palustris (strain BisB18)).